Consider the following 169-residue polypeptide: Probable phospholipid hydroperoxide glutathione peroxidase (169 aa).

Cysteine 43 is an active-site residue.

It belongs to the glutathione peroxidase family. As to quaternary structure, monomer. Has a tendency to form higher mass oligomers. Interacts with FUNDC1; this interaction promotes GPX4 recruitment into mitochondria through TOM/TIM complex where it is degraded by mitophagy.

The protein resides in the cytoplasm. The catalysed reaction is a hydroperoxy polyunsaturated fatty acid + 2 glutathione = a hydroxy polyunsaturated fatty acid + glutathione disulfide + H2O. In terms of biological role, protects cells and enzymes from oxidative damage, by catalyzing the reduction of hydrogen peroxide, lipid peroxides and organic hydroperoxide, by glutathione. The sequence is that of Probable phospholipid hydroperoxide glutathione peroxidase (GPXle-1) from Solanum lycopersicum (Tomato).